The primary structure comprises 684 residues: MSNTAVLNDLVALYDRPTEPMFRVKAKKSFKVPKEYVTDRFKNVAVEISNRFGEDDSETVTIDSVPLPDLADILTLGREENFSLFIPKHRNLSAKLINIFLQAENPKHLLSIACYAHDRVNPYLFIYALSVALIHRKDTKSLKIPNQIQTFPDKYFDSQVFSQGKEEMTVVPQGLRRPIEIPRDYTASDLEEEHRVAYWREDLGINLHHWHWHLVYPTDGGEIVTKKDRRGELFYYSHQQIVARYNFERFCNALKRVERLTDWQGPIKEAYFPKLDSLVAKRAYPARVQDMTMQDLDIPGQNIKVDVDDMIRWRDRIYRAIADGFITATNGSKMNLDDVTGIDILGNIMESSELSPNRQLYGNLHGFGHLMLSYIHDPRSHHLEPFGVIGDFTTAMRDPIFYRWHAFVDDVFQQFNGSLPRYTAEQLDYAGVQITDVNIKTPNAPDNEFRTFWQQSDVDMSRGVDFQDPGSVFVRFTHLNHEPFSYNITVNNTGNGVQEGTCRIFLAPATDERGNPWLFNNQRVMFVEMDRFKVTLRQGQNTITRNSTQSSVTIPFERTFRDLDTNRPAEGSEELDIFNFCGCGWPHHLLVPKGTPDGFKAQLFVMISNYADDKVEQDLSGSCNDAESYCGVRGGKYPDKRPMGYPFNRVARQGADTLQRFLTGNMIVQNCRIVHSDRTVRPRS.

The propeptide at 1–51 (MSNTAVLNDLVALYDRPTEPMFRVKAKKSFKVPKEYVTDRFKNVAVEISNR) is removed by PPAF1. N-linked (GlcNAc...) asparagine glycans are attached at residues Asn81 and Asn91. Residues His209, His213, and His238 each contribute to the Cu cation site. Residue Asn330 is glycosylated (N-linked (GlcNAc...) asparagine). Catalysis depends on Glu350, which acts as the Proton acceptor. Cu cation contacts are provided by His365, His369, and His405. N-linked (GlcNAc...) asparagine glycosylation is found at Asn416, Asn487, Asn491, and Asn546. 2 disulfide bridges follow: Cys581–Cys623 and Cys583–Cys630.

The protein belongs to the tyrosinase family. In terms of assembly, dimer. Might form a homodimer or a heterodimer with PPO1. Might interact with PPAF2 (via CLIP domain); the interaction might be required for PPO2 activity. The cofactor is Cu(2+). In terms of processing, precursor cleaved by PPAF1. As to expression, hemocytes.

Its subcellular location is the secreted. Its function is as follows. This is a copper-containing oxidase that functions in the formation of pigments such as melanins and other polyphenolic compounds. Catalyzes the oxidation of o-diphenols (N-acetyldopamine, 4-methylcatechol and dopamine). Cannot oxidize monophenols and p-phenols (L-tyrosine, tyramine, gentisic acid and hydroquinone). Binds to the surface of hemocytes and is involved in hemocyte melanization. Activation of the enzyme in response to bacterial lipopolysaccharides (LPS) suggests it may play a role in innate immunity. This is Phenoloxidase 2 from Holotrichia diomphalia (Korean black chafer).